The chain runs to 688 residues: Thyroid hormone-induced protein B (688 aa).

Residues 1-20 (MMLSHWVLLLSLGAVWLAEG) form the signal peptide. MAM domains lie at 26–169 (GSCT…GYCI), 170–330 (ECDF…SCSG), 341–500 (AGCD…SCKI), and 509–669 (GKCT…PCND). Asn32 and Asn135 each carry an N-linked (GlcNAc...) asparagine glycan. N-linked (GlcNAc...) asparagine glycosylation is found at Asn358 and Asn668.

The protein localises to the membrane. Its subcellular location is the secreted. The protein resides in the extracellular space. The protein is Thyroid hormone-induced protein B of Xenopus laevis (African clawed frog).